The following is a 215-amino-acid chain: ATP-dependent dethiobiotin synthetase BioD (215 aa).

13–18 is a binding site for ATP; it reads DIGKTV. Residue threonine 17 participates in Mg(2+) binding. Lysine 38 is an active-site residue. Threonine 42 serves as a coordination point for substrate. ATP is bound by residues aspartate 50, 115-118, and 175-176; these read EGAG and NH. The Mg(2+) site is built by aspartate 50 and glutamate 115.

It belongs to the dethiobiotin synthetase family. In terms of assembly, homodimer. Requires Mg(2+) as cofactor.

It localises to the cytoplasm. The enzyme catalyses (7R,8S)-7,8-diammoniononanoate + CO2 + ATP = (4R,5S)-dethiobiotin + ADP + phosphate + 3 H(+). It participates in cofactor biosynthesis; biotin biosynthesis; biotin from 7,8-diaminononanoate: step 1/2. Its function is as follows. Catalyzes a mechanistically unusual reaction, the ATP-dependent insertion of CO2 between the N7 and N8 nitrogen atoms of 7,8-diaminopelargonic acid (DAPA, also called 7,8-diammoniononanoate) to form a ureido ring. In Neisseria meningitidis serogroup C (strain 053442), this protein is ATP-dependent dethiobiotin synthetase BioD.